We begin with the raw amino-acid sequence, 583 residues long: Nuclear distribution protein nudE homolog 1 (583 aa).

Residues 14–195 (ATLEDTLGWY…QDKFKKQESR (182 aa)) are a coiled coil. Disordered stretches follow at residues 34 to 68 (LAEF…KAET), 211 to 339 (TFDG…TSNS), and 358 to 583 (HSVR…GETY). Positions 35 to 67 (AEFRDSSRELEQELEKDIERAEKQERHHQEKAE) are enriched in basic and acidic residues. 5 stretches are compositionally biased toward polar residues: residues 219-235 (PGST…TDSK), 279-319 (RSRL…TMRT), 329-339 (SASNKLPTSNS), 379-392 (NVYS…SITI), and 399-422 (SGSA…STPK). Residues 453–469 (RPSSRASTSYATSYARP) are compositionally biased toward low complexity. Residues 529-538 (RRGTYSSQGG) are compositionally biased toward polar residues.

The protein belongs to the nudE family. Self-associates. Interacts with PAC1.

Its subcellular location is the cytoplasm. The protein localises to the cytoskeleton. In terms of biological role, required for nuclear migration. This chain is Nuclear distribution protein nudE homolog 1 (NDE1), found in Gibberella zeae (strain ATCC MYA-4620 / CBS 123657 / FGSC 9075 / NRRL 31084 / PH-1) (Wheat head blight fungus).